Here is a 182-residue protein sequence, read N- to C-terminus: Large ribosomal subunit protein uL10 (182 aa).

Belongs to the universal ribosomal protein uL10 family. As to quaternary structure, part of the ribosomal stalk of the 50S ribosomal subunit. The N-terminus interacts with L11 and the large rRNA to form the base of the stalk. The C-terminus forms an elongated spine to which L12 dimers bind in a sequential fashion forming a multimeric L10(L12)X complex.

Forms part of the ribosomal stalk, playing a central role in the interaction of the ribosome with GTP-bound translation factors. This Janthinobacterium sp. (strain Marseille) (Minibacterium massiliensis) protein is Large ribosomal subunit protein uL10.